A 195-amino-acid polypeptide reads, in one-letter code: MADGQMPFSCHYPSRLRRDPSGLSLSSRLLDDGFGMDPFPDDLTASWPDWALPRLSSAWPGTLRSGMVPRGPTATARFGVPAEGRTPPPFPGEPWKVCVNVHSFKPEELMVKIKDGYVEVSGKHEEKQQEGGIVSKNFTKKIQLPAEVDPVTVFASLSPEGLLIIEAPQVPPYSTFGESSFNNELPQDSQEVTCT.

The residue at position 56 (Ser56) is a Phosphoserine. The residue at position 62 (Thr62) is a Phosphothreonine. Asymmetric dimethylarginine is present on residues Arg70 and Arg77. A sHSP domain is found at 73-184 (TATARFGVPA…TFGESSFNNE (112 aa)). Positions 175–195 (TFGESSFNNELPQDSQEVTCT) are disordered. Over residues 176–195 (FGESSFNNELPQDSQEVTCT) the composition is skewed to polar residues.

It belongs to the small heat shock protein (HSP20) family. In terms of assembly, monomer. Forms a ternary complex with BAG3 and HSPA1A. Component of the chaperone-assisted selective autophagy (CASA) complex consisting of BAG3, HSPA8/HSC70, HSPB8 and STUB1/CHIP. Interacts with HSPB1. Interacts with DNAJB6. Interacts with BAG3. In terms of processing, phosphorylated.

The protein localises to the cytoplasm. It is found in the nucleus. In terms of biological role, involved in the chaperone-assisted selective autophagy (CASA), a crucial process for protein quality control, particularly in mechanical strained cells and tissues such as muscle. Displays temperature-dependent chaperone activity. This chain is Heat shock protein beta-8 (HSPB8), found in Macaca mulatta (Rhesus macaque).